Reading from the N-terminus, the 435-residue chain is Glutamine synthetase (435 aa).

The GS beta-grasp domain maps to 12-94 (KGVKYFMISY…VAADCIMDDA (83 aa)). In terms of domain architecture, GS catalytic spans 100 to 435 (PRVVLKKLVA…EWEHQTTLDV (336 aa)). Mg(2+) contacts are provided by Glu123, Glu125, Glu180, and Glu187. Gly232 lines the L-glutamate pocket. His236 contributes to the Mg(2+) binding site. Residue Ser240 coordinates ATP. Positions 291 and 315 each coordinate L-glutamate. Residues Arg315 and Arg320 each coordinate ATP. A Mg(2+)-binding site is contributed by Glu328. Arg330 serves as a coordination point for L-glutamate.

It belongs to the glutamine synthetase family. Homooctamer. Requires Mg(2+) as cofactor.

It carries out the reaction L-glutamate + NH4(+) + ATP = L-glutamine + ADP + phosphate + H(+). Its activity is regulated as follows. Inhibited by methionine sulfoximine, ADP and pyrophosphate, but not by various nitrogen-containing metabolites that inhibit other GS enzymes. Its function is as follows. Catalyzes the ATP-dependent biosynthesis of glutamine from glutamate and ammonia. This is Glutamine synthetase from Rhizobium meliloti (strain 1021) (Ensifer meliloti).